Here is a 282-residue protein sequence, read N- to C-terminus: Bifunctional protein FolD (282 aa).

Residues 164 to 166 (GAS), I189, and I230 contribute to the NADP(+) site.

It belongs to the tetrahydrofolate dehydrogenase/cyclohydrolase family. In terms of assembly, homodimer.

It carries out the reaction (6R)-5,10-methylene-5,6,7,8-tetrahydrofolate + NADP(+) = (6R)-5,10-methenyltetrahydrofolate + NADPH. The enzyme catalyses (6R)-5,10-methenyltetrahydrofolate + H2O = (6R)-10-formyltetrahydrofolate + H(+). It participates in one-carbon metabolism; tetrahydrofolate interconversion. In terms of biological role, catalyzes the oxidation of 5,10-methylenetetrahydrofolate to 5,10-methenyltetrahydrofolate and then the hydrolysis of 5,10-methenyltetrahydrofolate to 10-formyltetrahydrofolate. The protein is Bifunctional protein FolD of Campylobacter jejuni subsp. jejuni serotype O:2 (strain ATCC 700819 / NCTC 11168).